Reading from the N-terminus, the 221-residue chain is ATP-dependent dethiobiotin synthetase BioD (221 aa).

Asp-11–Phe-16 is a binding site for ATP. Position 15 (Thr-15) interacts with Mg(2+). Lys-35 is an active-site residue. Substrate is bound at residue Thr-39. ATP contacts are provided by residues Asp-44 and Glu-103 to Gly-106. Positions 44 and 103 each coordinate Mg(2+).

It belongs to the dethiobiotin synthetase family. As to quaternary structure, homodimer. Mg(2+) serves as cofactor.

The protein localises to the cytoplasm. It carries out the reaction (7R,8S)-7,8-diammoniononanoate + CO2 + ATP = (4R,5S)-dethiobiotin + ADP + phosphate + 3 H(+). The protein operates within cofactor biosynthesis; biotin biosynthesis; biotin from 7,8-diaminononanoate: step 1/2. Functionally, catalyzes a mechanistically unusual reaction, the ATP-dependent insertion of CO2 between the N7 and N8 nitrogen atoms of 7,8-diaminopelargonic acid (DAPA, also called 7,8-diammoniononanoate) to form a ureido ring. This chain is ATP-dependent dethiobiotin synthetase BioD, found in Leptospira interrogans serogroup Icterohaemorrhagiae serovar copenhageni (strain Fiocruz L1-130).